Here is a 575-residue protein sequence, read N- to C-terminus: U3 small nucleolar RNA-associated protein 9 (575 aa).

Composition is skewed to basic and acidic residues over residues 340–355 (NEKNNADEADQKKLEE) and 364–375 (VQHEKKETETKI). The disordered stretch occupies residues 340–375 (NEKNNADEADQKKLEEKEEEAQPEVQHEKKETETKI). Phosphoserine occurs at positions 547 and 564.

In terms of assembly, interacts with snoRNA U3. Interacts with MPP10. Component of the ribosomal small subunit (SSU) processome composed of at least 40 protein subunits and snoRNA U3. In the absence of snoRNA3, forms a complex with other t-UTPs. This complex can associate with pre-18S ribosomal RNAs.

It is found in the nucleus. The protein localises to the nucleolus. Functionally, involved in nucleolar processing of pre-18S ribosomal RNA. Required for optimal pre-ribosomal RNA transcription by RNA polymerase I together with a subset of U3 proteins required for transcription (t-UTPs). This Saccharomyces cerevisiae (strain ATCC 204508 / S288c) (Baker's yeast) protein is U3 small nucleolar RNA-associated protein 9 (UTP9).